We begin with the raw amino-acid sequence, 101 residues long: Small ribosomal subunit protein cS23 (101 aa).

It belongs to the chloroplast-specific ribosomal protein cS23 family. In terms of assembly, part of the 30S ribosomal subunit.

The protein resides in the plastid. It is found in the chloroplast. Functionally, probably a ribosomal protein or a ribosome-associated protein. This chain is Small ribosomal subunit protein cS23 (ycf65), found in Euglena stellata.